The chain runs to 652 residues: Acetyl-coenzyme A synthetase (652 aa).

Residues Arg-191 to Arg-194, Thr-311, and Asn-335 each bind CoA. ATP is bound by residues Gly-387–Pro-389, Asp-411–Thr-416, Asp-500, and Arg-515. A CoA-binding site is contributed by Ser-523. Arg-526 is an ATP binding site. Mg(2+) is bound by residues Val-537, His-539, and Ile-542. Arg-584 contacts CoA. At Lys-609 the chain carries N6-acetyllysine.

The protein belongs to the ATP-dependent AMP-binding enzyme family. Mg(2+) is required as a cofactor. In terms of processing, acetylated. Deacetylation by the SIR2-homolog deacetylase activates the enzyme.

It carries out the reaction acetate + ATP + CoA = acetyl-CoA + AMP + diphosphate. In terms of biological role, catalyzes the conversion of acetate into acetyl-CoA (AcCoA), an essential intermediate at the junction of anabolic and catabolic pathways. Acs undergoes a two-step reaction. In the first half reaction, Acs combines acetate with ATP to form acetyl-adenylate (AcAMP) intermediate. In the second half reaction, it can then transfer the acetyl group from AcAMP to the sulfhydryl group of CoA, forming the product AcCoA. Functionally, enables the cell to use acetate during aerobic growth to generate energy via the TCA cycle, and biosynthetic compounds via the glyoxylate shunt. Acetylates CheY, the response regulator involved in flagellar movement and chemotaxis. This is Acetyl-coenzyme A synthetase from Sodalis glossinidius (strain morsitans).